The sequence spans 766 residues: Serine/threonine-protein kinase DCLK2 (766 aa).

The tract at residues 1 to 45 (MASTRSIELEHFEERDKRPRPGSRRGAPSSSGGSSSSGPKGNGLI) is disordered. Residues 7–19 (IELEHFEERDKRP) show a composition bias toward basic and acidic residues. A compositionally biased stretch (low complexity) spans 24–39 (RRGAPSSSGGSSSSGP). Threonine 61 is subject to Phosphothreonine. Doublecortin domains are found at residues 72-158 (KKAR…VDYT) and 197-280 (KLVT…AQDD). Low complexity-rich tracts occupy residues 300–312 (AVKY…PGPS) and 324–347 (TPSS…SPGS). The segment at 300-378 (AVKYSGSKSP…ELDRCISPEG (79 aa)) is disordered. Serine 362 is modified (phosphoserine). The Protein kinase domain occupies 394 to 651 (YKIGKVIGDG…AGQILSHPWV (258 aa)). ATP contacts are provided by residues 400-408 (IGDGNFAVV) and lysine 423. Aspartate 515 (proton acceptor) is an active-site residue. The residue at position 647 (serine 647) is a Phosphoserine. The residue at position 666 (threonine 666) is a Phosphothreonine. Positions 707-766 (CQDSGRPGMEPISPVPPSVEEIPVPGEAVPAPTPPESPTPHPPPAAPGGERAGTWRRHRD) are disordered. The segment covering 724-736 (SVEEIPVPGEAVP) has biased composition (low complexity). Positions 737-752 (APTPPESPTPHPPPAA) are enriched in pro residues.

This sequence belongs to the protein kinase superfamily. CAMK Ser/Thr protein kinase family. CaMK subfamily. As to quaternary structure, binds to and stabilizes microtubules. Interacts with MAPK8IP1/JIP-1, MAPK8IP2/JIP-2, MAPK9/JNK2, PPP1R9B/NEURABIN-2 and actin. Autophosphorylated. As to expression, expressed in the brain, heart and eyes.

It is found in the cytoplasm. It localises to the cytoskeleton. The enzyme catalyses L-seryl-[protein] + ATP = O-phospho-L-seryl-[protein] + ADP + H(+). It catalyses the reaction L-threonyl-[protein] + ATP = O-phospho-L-threonyl-[protein] + ADP + H(+). Protein kinase with a significantly reduced C(a2+)/CAM affinity and dependence compared to other members of the CaMK family. May play a role in the down-regulation of CRE-dependent gene activation probably by phosphorylation of the CREB coactivator CRTC2/TORC2 and the resulting retention of TORC2 in the cytoplasm. This chain is Serine/threonine-protein kinase DCLK2 (DCLK2), found in Homo sapiens (Human).